The sequence spans 273 residues: Thiazole synthase (273 aa).

The Schiff-base intermediate with DXP role is filled by K113. Residues G174, 201-202, and 223-224 contribute to the 1-deoxy-D-xylulose 5-phosphate site; these read AG and NT.

The protein belongs to the ThiG family. Homotetramer. Forms heterodimers with either ThiH or ThiS.

It localises to the cytoplasm. The enzyme catalyses [ThiS sulfur-carrier protein]-C-terminal-Gly-aminoethanethioate + 2-iminoacetate + 1-deoxy-D-xylulose 5-phosphate = [ThiS sulfur-carrier protein]-C-terminal Gly-Gly + 2-[(2R,5Z)-2-carboxy-4-methylthiazol-5(2H)-ylidene]ethyl phosphate + 2 H2O + H(+). Its pathway is cofactor biosynthesis; thiamine diphosphate biosynthesis. Its function is as follows. Catalyzes the rearrangement of 1-deoxy-D-xylulose 5-phosphate (DXP) to produce the thiazole phosphate moiety of thiamine. Sulfur is provided by the thiocarboxylate moiety of the carrier protein ThiS. In vitro, sulfur can be provided by H(2)S. This Salinibacter ruber (strain DSM 13855 / M31) protein is Thiazole synthase.